The sequence spans 83 residues: Toxin To12 (83 aa).

The signal sequence occupies residues 1-19 (MKGLILFICGFMMIGVILA). Residues 20–82 (KEGYPMDHEG…VWDYYNNKCG (63 aa)) enclose the LCN-type CS-alpha/beta domain. 4 cysteine pairs are disulfide-bonded: C30–C81, C34–C57, C42–C62, and C46–C64. A Cysteine amide modification is found at C81.

It belongs to the long (4 C-C) scorpion toxin superfamily. Sodium channel inhibitor family. Beta subfamily. As to expression, expressed by the venom gland.

It is found in the secreted. In terms of biological role, beta toxins bind voltage-independently at site-4 of sodium channels (Nav) and shift the voltage of activation toward more negative potentials thereby affecting sodium channel activation and promoting spontaneous and repetitive firing. The protein is Toxin To12 of Tityus obscurus (Amazonian scorpion).